The sequence spans 590 residues: Aspartate--tRNA(Asp/Asn) ligase (590 aa).

Glu-173 provides a ligand contact to L-aspartate. The segment at 197 to 200 (QIFK) is aspartate. Residue Arg-219 coordinates L-aspartate. Residues 219–221 (RDE) and Gln-228 each bind ATP. His-450 serves as a coordination point for L-aspartate. ATP is bound at residue Glu-484. Arg-491 lines the L-aspartate pocket. 536-539 (GLDR) contributes to the ATP binding site.

This sequence belongs to the class-II aminoacyl-tRNA synthetase family. Type 1 subfamily. Homodimer.

It localises to the cytoplasm. The catalysed reaction is tRNA(Asx) + L-aspartate + ATP = L-aspartyl-tRNA(Asx) + AMP + diphosphate. Functionally, aspartyl-tRNA synthetase with relaxed tRNA specificity since it is able to aspartylate not only its cognate tRNA(Asp) but also tRNA(Asn). Reaction proceeds in two steps: L-aspartate is first activated by ATP to form Asp-AMP and then transferred to the acceptor end of tRNA(Asp/Asn). The protein is Aspartate--tRNA(Asp/Asn) ligase of Coxiella burnetii (strain RSA 331 / Henzerling II).